The primary structure comprises 121 residues: Large ribosomal subunit protein uL22 (121 aa).

The protein belongs to the universal ribosomal protein uL22 family. As to quaternary structure, part of the 50S ribosomal subunit.

Its function is as follows. This protein binds specifically to 23S rRNA; its binding is stimulated by other ribosomal proteins, e.g. L4, L17, and L20. It is important during the early stages of 50S assembly. It makes multiple contacts with different domains of the 23S rRNA in the assembled 50S subunit and ribosome. The globular domain of the protein is located near the polypeptide exit tunnel on the outside of the subunit, while an extended beta-hairpin is found that lines the wall of the exit tunnel in the center of the 70S ribosome. The polypeptide is Large ribosomal subunit protein uL22 (Synechococcus sp. (strain CC9311)).